We begin with the raw amino-acid sequence, 362 residues long: Fructose-bisphosphate aldolase (362 aa).

A dihydroxyacetone phosphate-binding site is contributed by Asp33. 2 residues coordinate D-glyceraldehyde 3-phosphate: Ser35 and Thr38. Arg42 lines the beta-D-fructose 1,6-bisphosphate pocket. Residue Lys106 participates in D-glyceraldehyde 3-phosphate binding. Position 145 (Lys145) interacts with dihydroxyacetone phosphate. Residue Glu188 coordinates D-glyceraldehyde 3-phosphate. Catalysis depends on Glu188, which acts as the Proton acceptor. Dihydroxyacetone phosphate-binding residues include Lys230, Ser272, and Gly273. The active-site Schiff-base intermediate with dihydroxyacetone phosphate is the Lys230. Residues 272-274 (SGG) and Ser300 each bind beta-D-fructose 1,6-bisphosphate. Residues Gly302 and Arg303 each contribute to the dihydroxyacetone phosphate site. Beta-D-fructose 1,6-bisphosphate is bound at residue Arg303.

The protein belongs to the class I fructose-bisphosphate aldolase family. As to quaternary structure, homotetramer. Interacts with TRAP (via cytoplasmic domain); the interaction prevents substrate binding and thereby inhibits aldolase activity. Interacts with MTRAP (via cytoplasmic domain); MTRAP phosphorylation may increase the binding to FBPA. Interact with RH1 (via cytoplasmic domain). Interacts with RH2b (via cytoplasmic domain). Interacts with RH4 (via cytoplasmic domain). Interacts with AMA1 (via cytoplasmic domain); the interaction is weak, however it may be increased upon AMA1 phosphorylation. Interacts with EBA140 (via cytoplasmic domain); the interaction is weak. Interacts with EBA175 (via cytoplasmic domain); the interaction is weak. Interacts with EBA181 (via cytoplasmic domain); the interaction is weak. Interacts with G-actin and F-actin. May interact with ACT2/actin II; the interaction inhibits FBPA catalytic activity. Interacts with human SLC4A1/band 3 (via N-terminus); the interaction inhibits FBPA catalytic activity.

The protein resides in the cytoplasm. It is found in the membrane. Its subcellular location is the host cell membrane. It carries out the reaction beta-D-fructose 1,6-bisphosphate = D-glyceraldehyde 3-phosphate + dihydroxyacetone phosphate. It functions in the pathway carbohydrate degradation; glycolysis; D-glyceraldehyde 3-phosphate and glycerone phosphate from D-glucose: step 4/4. With respect to regulation, the cytoplasmic tail of TRAP and probably other adhesins acts as a competitive inhibitor as the binding sites of the glycolytic substrate fructose 1,6-bisphosphate and TRAP partially overlap. Inhibited by suramin, an antiparasitic drug used to treat Trypanosome-mediated infection. Functionally, plays a key role in glycolysis by catalyzing the cleavage of fructose 1,6-bisphosphate into dihydroxyacetone phosphate and glyceraldehyde 3-phosphate. Independently of its catalytic activity, connects the actin filaments, and thus the actomyosin motor, to cell surface adhesins of the thrombospondin-related anonymous protein (TRAP), the erythrocyte binding ligand (EBL) and reticulocyte binding homolog (RH) protein families; this interaction is probably involved in transducing the motor force across the parasite surface required for sporozoite and ookinete gliding motility and merozoite invasion. Stimulates actin polymerisation. The chain is Fructose-bisphosphate aldolase from Plasmodium falciparum (isolate K1 / Thailand).